The sequence spans 100 residues: Eukaryotic translation initiation factor 4E-binding protein 3 (100 aa).

The YXXXXLphi motif signature appears at 40–46; that stretch reads YDRKFLL. The interval 81–100 is disordered; the sequence is LKEQETEEEIPDDAQFEMDI. The segment covering 85–100 has biased composition (acidic residues); sequence ETEEEIPDDAQFEMDI. A TOS motif motif is present at residues 96–100; it reads FEMDI.

The protein belongs to the eIF4E-binding protein family. In terms of assembly, interacts with EIF4E. Interacts with RPA2 (in unphosphorylated form via N-terminus); the interaction enhances EIF4EBP3-mediated inhibition of EIF4E-mediated mRNA nuclear export. In terms of processing, phosphorylated. Expression is highest in skeletal muscle, heart, kidney, and pancreas, whereas there is very little expression in brain and thymus.

The protein localises to the cytoplasm. It is found in the nucleus. Functionally, repressor of translation initiation that regulates EIF4E activity by preventing its assembly into the eIF4F complex: the hypophosphorylated form competes with EIF4G1/EIF4G3 and strongly binds to EIF4E, leading to repression of translation. In contrast, the hyperphosphorylated form dissociates from EIF4E, allowing interaction between EIF4G1/EIF4G3 and EIF4E, leading to initiation of translation. Inhibits EIF4E-mediated mRNA nuclear export. This chain is Eukaryotic translation initiation factor 4E-binding protein 3 (EIF4EBP3), found in Homo sapiens (Human).